A 188-amino-acid chain; its full sequence is Elongation factor P (188 aa).

The protein belongs to the elongation factor P family.

Its subcellular location is the cytoplasm. It functions in the pathway protein biosynthesis; polypeptide chain elongation. Functionally, involved in peptide bond synthesis. Stimulates efficient translation and peptide-bond synthesis on native or reconstituted 70S ribosomes in vitro. Probably functions indirectly by altering the affinity of the ribosome for aminoacyl-tRNA, thus increasing their reactivity as acceptors for peptidyl transferase. The polypeptide is Elongation factor P (Caulobacter sp. (strain K31)).